The chain runs to 235 residues: Ribitol-5-phosphate cytidylyltransferase (235 aa).

Residues 7–10 (LAGG), 82–88 (GADRNTS), and Ser113 contribute to the CTP site.

The protein belongs to the IspD/TarI cytidylyltransferase family. TarI subfamily.

It catalyses the reaction D-ribitol 5-phosphate + CTP + H(+) = CDP-L-ribitol + diphosphate. The protein operates within cell wall biogenesis; poly(ribitol phosphate) teichoic acid biosynthesis. In terms of biological role, catalyzes the transfer of the cytidylyl group of CTP to D-ribitol 5-phosphate. The chain is Ribitol-5-phosphate cytidylyltransferase from Streptococcus pneumoniae serotype 19F (strain G54).